Here is a 327-residue protein sequence, read N- to C-terminus: Flotillin-like protein FloA (327 aa).

Residues Phe-7 to Gly-27 traverse the membrane as a helical segment.

It belongs to the flotillin-like FloA family. Homooligomerizes.

It is found in the cell membrane. The protein localises to the membrane raft. Found in functional membrane microdomains (FMM) that may be equivalent to eukaryotic membrane rafts. FMMs are highly dynamic and increase in number as cells age. Flotillins are thought to be important factors in membrane fluidity. In Finegoldia magna (strain ATCC 29328 / DSM 20472 / WAL 2508) (Peptostreptococcus magnus), this protein is Flotillin-like protein FloA.